Consider the following 161-residue polypeptide: Transcriptional regulator MraZ (161 aa).

SpoVT-AbrB domains follow at residues 7–69 and 98–141; these read KELH…EPDV and LDVV…EPER.

Belongs to the MraZ family. In terms of assembly, forms oligomers.

Its subcellular location is the cytoplasm. The protein localises to the nucleoid. The protein is Transcriptional regulator MraZ of Chlorobium limicola (strain DSM 245 / NBRC 103803 / 6330).